The sequence spans 447 residues: Probable glycine dehydrogenase (decarboxylating) subunit 1 (447 aa).

The protein belongs to the GcvP family. N-terminal subunit subfamily. The glycine cleavage system is composed of four proteins: P, T, L and H. In this organism, the P 'protein' is a heterodimer of two subunits.

The enzyme catalyses N(6)-[(R)-lipoyl]-L-lysyl-[glycine-cleavage complex H protein] + glycine + H(+) = N(6)-[(R)-S(8)-aminomethyldihydrolipoyl]-L-lysyl-[glycine-cleavage complex H protein] + CO2. Its function is as follows. The glycine cleavage system catalyzes the degradation of glycine. The P protein binds the alpha-amino group of glycine through its pyridoxal phosphate cofactor; CO(2) is released and the remaining methylamine moiety is then transferred to the lipoamide cofactor of the H protein. The protein is Probable glycine dehydrogenase (decarboxylating) subunit 1 of Bacillus anthracis (strain A0248).